A 286-amino-acid polypeptide reads, in one-letter code: Ferric acinetobactin reductase (286 aa).

The FAD-binding FR-type domain maps to 25–131; it reads MEQLEMTIVS…IGPRPHFIPN (107 aa). Residues Arg-79, Val-80, Thr-82, Asp-96, Val-98, His-100, Asp-102, Ser-104, Ala-106, Arg-250, Gly-252, and Ser-255 each contribute to the FAD site.

Belongs to the SIP oxidoreductase family. Monomer in solution. It depends on FAD as a cofactor.

It catalyses the reaction 2 a Fe(II)-siderophore + NAD(+) + H(+) = 2 a Fe(III)-siderophore + NADH. It carries out the reaction 2 a Fe(II)-siderophore + NADP(+) + H(+) = 2 a Fe(III)-siderophore + NADPH. Functionally, ferric-siderophore reductase involved in iron removal from the siderophores after their transport into the cell. Interacts with the siderophores acinetobactin (Acb) and preacinetobactin (pre-Acb) and catalyzes the reduction of the ferric iron bound to the siderophores to ferrous iron, resulting in destabilization of the siderophore chelation complex and entrance of ferrous iron into the intracellular pool of bioavailable metals. Can use NADH and NADPH as electron donors in vitro, but the reduction rate is very slow, suggesting that NADH and NADPH are not the physiological partners of BauF. This chain is Ferric acinetobactin reductase, found in Acinetobacter baumannii.